Reading from the N-terminus, the 272-residue chain is Glucosyl-3-phosphoglycerate/mannosyl-3-phosphoglycerate phosphatase (272 aa).

The active-site Nucleophile is the Asp-8. Mg(2+) contacts are provided by Asp-8, Asp-10, and Asp-214.

This sequence belongs to the HAD-like hydrolase superfamily. MPGP family. In terms of assembly, monomer. It depends on Co(2+) as a cofactor. Requires Mg(2+) as cofactor. The cofactor is Ni(2+).

The enzyme catalyses (2R)-2-O-(alpha-D-glucopyranosyl)-3-phospho-glycerate + H2O = (2R)-2-O-(alpha-D-glucopyranosyl)-glycerate + phosphate. It carries out the reaction 2-O-(alpha-D-mannosyl)-3-phosphoglycerate + H2O = (2R)-2-O-(alpha-D-mannosyl)-glycerate + phosphate. Its function is as follows. Involved in the biosynthesis of glucosylglycerate. Catalyzes the dephosphorylation of glucosyl-3-phosphoglycerate (GPG) and mannosyl-3-phosphoglycerate (MPG) to glucosylglycerate (GG) and mannosylglycerate (MG), respectively. In Methanococcoides burtonii (strain DSM 6242 / NBRC 107633 / OCM 468 / ACE-M), this protein is Glucosyl-3-phosphoglycerate/mannosyl-3-phosphoglycerate phosphatase.